Reading from the N-terminus, the 295-residue chain is Elongation factor Ts (295 aa).

An involved in Mg(2+) ion dislocation from EF-Tu region spans residues 79 to 82 (TDFV).

Belongs to the EF-Ts family.

It localises to the cytoplasm. Associates with the EF-Tu.GDP complex and induces the exchange of GDP to GTP. It remains bound to the aminoacyl-tRNA.EF-Tu.GTP complex up to the GTP hydrolysis stage on the ribosome. In Bacillus cereus (strain B4264), this protein is Elongation factor Ts.